Here is a 430-residue protein sequence, read N- to C-terminus: Aspartate aminotransferase, mitochondrial (430 aa).

Residues 1–29 (MALLHSGRVLSGVASAFHPGLAAAASARA) constitute a mitochondrion transit peptide. Threonine 48 is modified (phosphothreonine). Position 59 is an N6-acetyllysine (lysine 59). A substrate-binding site is contributed by glycine 65. Lysine 73 carries the post-translational modification N6-acetyllysine; alternate. Position 73 is an N6-succinyllysine; alternate (lysine 73). Lysine 82 is subject to N6-acetyllysine. An N6-acetyllysine; alternate modification is found at lysine 90. Lysine 90 is subject to N6-succinyllysine; alternate. Tyrosine 96 is subject to 3'-nitrotyrosine; alternate. At tyrosine 96 the chain carries Phosphotyrosine; alternate. N6-acetyllysine; alternate is present on residues lysine 107, lysine 122, and lysine 159. N6-succinyllysine; alternate occurs at positions 107, 122, and 159. Tryptophan 162 lines the substrate pocket. Lysine 185 carries the N6-acetyllysine; alternate modification. Lysine 185 is subject to N6-succinyllysine; alternate. Asparagine 215 is a binding site for substrate. N6-succinyllysine is present on lysine 227. Residue lysine 234 is modified to N6-acetyllysine. N6-acetyllysine; alternate is present on residues lysine 279 and lysine 296. Position 279 is an N6-(pyridoxal phosphate)lysine; alternate (lysine 279). Residue lysine 296 is modified to N6-succinyllysine; alternate. Lysine 302 carries the N6-acetyllysine modification. Lysine 309 is modified (N6-acetyllysine; alternate). An N6-succinyllysine; alternate modification is found at lysine 309. Arginine 313 carries the asymmetric dimethylarginine modification. Lysine 345 bears the N6-acetyllysine mark. At lysine 363 the chain carries N6-acetyllysine; alternate. Residue lysine 363 is modified to N6-succinyllysine; alternate. Residues lysine 364 and lysine 387 each carry the N6-acetyllysine modification. N6-acetyllysine; alternate occurs at positions 396 and 404. N6-succinyllysine; alternate occurs at positions 396 and 404. Residue arginine 407 coordinates substrate.

This sequence belongs to the class-I pyridoxal-phosphate-dependent aminotransferase family. Homodimer. Pyridoxal 5'-phosphate is required as a cofactor.

The protein localises to the mitochondrion matrix. It localises to the cell membrane. The catalysed reaction is L-aspartate + 2-oxoglutarate = oxaloacetate + L-glutamate. It catalyses the reaction L-kynurenine + 2-oxoglutarate = kynurenate + L-glutamate + H2O. Its function is as follows. Catalyzes the irreversible transamination of the L-tryptophan metabolite L-kynurenine to form kynurenic acid (KA). As a member of the malate-aspartate shuttle, it has a key role in the intracellular NAD(H) redox balance. Is important for metabolite exchange between mitochondria and cytosol, and for amino acid metabolism. Facilitates cellular uptake of long-chain free fatty acids. This is Aspartate aminotransferase, mitochondrial (GOT2) from Sus scrofa (Pig).